A 538-amino-acid chain; its full sequence is Efflux pump radE (538 aa).

3 stretches are compositionally biased toward basic and acidic residues: residues 1-12, 20-35, and 65-74; these read MATSRDFGREPP, EAGH…VSEH, and DPKEEERDPN. Disordered regions lie at residues 1–35 and 65–90; these read MATS…VSEH and DPKE…PQNW. 12 helical membrane-spanning segments follow: residues 100-120, 134-154, 163-183, 194-214, 225-245, 253-273, 327-347, 362-382, 409-429, 436-456, 482-502, and 505-525; these read AVLS…APGI, LATF…LVLA, VVIY…CALS, FLCG…IADL, SVWS…GGFL, WIFW…LLVL, PICL…YFMI, EGIV…GVVV, IPPT…YGWT, WAVP…INIS, IFGA…GLGW, and SLLA…FYYG.

It belongs to the major facilitator superfamily.

The protein localises to the cell membrane. Efflux pump that might be required for efficient secretion of radicicol or other secondary metabolies produced by the radicicol gene cluster. The chain is Efflux pump radE from Floropilus chiversii (Chaetomium chiversii).